Consider the following 416-residue polypeptide: Serine hydroxymethyltransferase (416 aa).

Residues leucine 118 and 122–124 (GHL) contribute to the (6S)-5,6,7,8-tetrahydrofolate site. Position 226 is an N6-(pyridoxal phosphate)lysine (lysine 226). Residues glutamate 242 and 350–352 (SPF) each bind (6S)-5,6,7,8-tetrahydrofolate.

It belongs to the SHMT family. In terms of assembly, homodimer. The cofactor is pyridoxal 5'-phosphate.

The protein localises to the cytoplasm. The catalysed reaction is (6R)-5,10-methylene-5,6,7,8-tetrahydrofolate + glycine + H2O = (6S)-5,6,7,8-tetrahydrofolate + L-serine. It functions in the pathway one-carbon metabolism; tetrahydrofolate interconversion. The protein operates within amino-acid biosynthesis; glycine biosynthesis; glycine from L-serine: step 1/1. Functionally, catalyzes the reversible interconversion of serine and glycine with tetrahydrofolate (THF) serving as the one-carbon carrier. This reaction serves as the major source of one-carbon groups required for the biosynthesis of purines, thymidylate, methionine, and other important biomolecules. Also exhibits THF-independent aldolase activity toward beta-hydroxyamino acids, producing glycine and aldehydes, via a retro-aldol mechanism. The chain is Serine hydroxymethyltransferase from Helicobacter pylori (strain Shi470).